A 1132-amino-acid chain; its full sequence is Fas-binding factor 1 homolog (1132 aa).

Disordered regions lie at residues Asp18 to Ser50, Ala65 to Val84, and Lys89 to Glu570. Low complexity predominate over residues Ala35 to Ser46. 2 stretches are compositionally biased toward basic and acidic residues: residues Ala134–Pro148 and Gly189–Pro206. Over residues Thr226–Met235 the composition is skewed to acidic residues. Basic and acidic residues-rich tracts occupy residues Gln244–Leu270 and Ile278–Glu303. Composition is skewed to polar residues over residues Arg331 to Asn341 and Ala388 to Asn410. 2 stretches are compositionally biased toward low complexity: residues Ala458 to Ser480 and Pro511 to Ala520. Positions Thr534–Ala548 are enriched in polar residues. Coiled-coil stretches lie at residues Arg576–Thr727, Ala769–Glu882, and Leu918–Leu1044.

It is found in the cytoplasm. Its subcellular location is the cytoskeleton. It localises to the microtubule organizing center. The protein localises to the centrosome. The protein resides in the centriole. It is found in the spindle pole. Its subcellular location is the cell junction. In terms of biological role, keratin-binding protein required for epithelial cell polarization. Required for ciliogenesis. This Gallus gallus (Chicken) protein is Fas-binding factor 1 homolog (FBF1).